Consider the following 230-residue polypeptide: Vacuole-localized protein 4 (230 aa).

The signal sequence occupies residues methionine 1 to alanine 19.

It is found in the vacuole. Its function is as follows. Vacuolar protein required for aerial conidiation and conidial maturation. Also involved in blastospore production and cell cycle. Plays a vital role in the secretion of Pr1 proteases for cuticular penetration and hence contributes significantly to host infection and virulence. The polypeptide is Vacuole-localized protein 4 (Beauveria bassiana (strain ARSEF 2860) (White muscardine disease fungus)).